A 247-amino-acid chain; its full sequence is Neurotrophic factor BDNF precursor form (247 aa).

Positions 1–18 (MTILFLTMVISYFGCMKA) are cleaved as a signal peptide. The propeptide occupies 19-128 (APMKEANIRG…AANMSMRVRR (110 aa)). N-linked (GlcNAc...) asparagine glycosylation occurs at Asn-121. 3 disulfide bridges follow: Cys-141/Cys-208, Cys-186/Cys-237, and Cys-196/Cys-239.

Belongs to the NGF-beta family. As to quaternary structure, monomers and homodimers. Binds to NTRK2/TRKB. Can form heterodimers with other neurotrophin family members, such as NTF3 and NTF4 (in vitro), but the physiological relevance of this is not clear. BDNF precursor form: interacts with the heterodimer formed by NGFR and SORCS2. In terms of processing, N-glycosylated and glycosulfated, contrary to mature BDNF. Post-translationally, mature BDNF is produced by proteolytic removal of the propeptide, catalyzed by a FURIN family member. In addition, the precursor form is proteolytically cleaved within the propeptide, but this is not an obligatory intermediate for the production of mature BDNF. Can be converted into mature BDNF by plasmin (PLG). As to expression, detected in blood plasma and in saliva (at protein level). Brain. Highly expressed in hippocampus, amygdala, cerebral cortex and cerebellum. Also expressed in heart, lung, skeletal muscle, testis, prostate and placenta.

Its subcellular location is the secreted. Its function is as follows. Important signaling molecule that activates signaling cascades downstream of NTRK2. During development, promotes the survival and differentiation of selected neuronal populations of the peripheral and central nervous systems. Participates in axonal growth, pathfinding and in the modulation of dendritic growth and morphology. Major regulator of synaptic transmission and plasticity at adult synapses in many regions of the CNS. The versatility of BDNF is emphasized by its contribution to a range of adaptive neuronal responses including long-term potentiation (LTP), long-term depression (LTD), certain forms of short-term synaptic plasticity, as well as homeostatic regulation of intrinsic neuronal excitability. Important signaling molecule that activates signaling cascades downstream of NTRK2. Activates signaling cascades via the heterodimeric receptor formed by NGFR and SORCS2. Signaling via NGFR and SORCS2 plays a role in synaptic plasticity and long-term depression (LTD). Binding to NGFR and SORCS2 promotes neuronal apoptosis. Promotes neuronal growth cone collapse. This chain is Neurotrophic factor BDNF precursor form, found in Homo sapiens (Human).